Reading from the N-terminus, the 234-residue chain is Endonuclease V (234 aa).

Positions 42 and 108 each coordinate Mg(2+).

It belongs to the endonuclease V family. It depends on Mg(2+) as a cofactor.

It is found in the cytoplasm. It catalyses the reaction Endonucleolytic cleavage at apurinic or apyrimidinic sites to products with a 5'-phosphate.. Its function is as follows. DNA repair enzyme involved in the repair of deaminated bases. Selectively cleaves double-stranded DNA at the second phosphodiester bond 3' to a deoxyinosine leaving behind the intact lesion on the nicked DNA. The polypeptide is Endonuclease V (Geotalea uraniireducens (strain Rf4) (Geobacter uraniireducens)).